Consider the following 385-residue polypeptide: Torsin-3A (385 aa).

The signal sequence occupies residues 1-21; it reads MFLGALWLLLLLPLRPPGAQG. Asn-110 carries an N-linked (GlcNAc...) asparagine glycan. An ATP-binding site is contributed by 155–162; sequence GWSGTGKN.

This sequence belongs to the ClpA/ClpB family. Torsin subfamily. As to quaternary structure, interacts with TOR1AIP1. In terms of processing, N-glycosylated.

It localises to the cytoplasm. The protein localises to the endoplasmic reticulum lumen. The polypeptide is Torsin-3A (Tor3a) (Mus musculus (Mouse)).